The following is a 662-amino-acid chain: DNA ligase (662 aa).

NAD(+)-binding positions include 31–35, 80–81, and Glu-109; these read DYEYD and SL. The active-site N6-AMP-lysine intermediate is the Lys-111. NAD(+) contacts are provided by Arg-132, Glu-166, Lys-282, and Lys-306. Zn(2+) is bound by residues Cys-400, Cys-403, Cys-418, and Cys-423. The region spanning 581–662 is the BRCT domain; sequence KVSNIFEGKT…FEEMLKGENI (82 aa).

It belongs to the NAD-dependent DNA ligase family. LigA subfamily. It depends on Mg(2+) as a cofactor. Mn(2+) serves as cofactor.

The enzyme catalyses NAD(+) + (deoxyribonucleotide)n-3'-hydroxyl + 5'-phospho-(deoxyribonucleotide)m = (deoxyribonucleotide)n+m + AMP + beta-nicotinamide D-nucleotide.. In terms of biological role, DNA ligase that catalyzes the formation of phosphodiester linkages between 5'-phosphoryl and 3'-hydroxyl groups in double-stranded DNA using NAD as a coenzyme and as the energy source for the reaction. It is essential for DNA replication and repair of damaged DNA. This chain is DNA ligase, found in Thermoanaerobacter sp. (strain X514).